Consider the following 425-residue polypeptide: Dihydroorotase (425 aa).

His56 and His58 together coordinate Zn(2+). Substrate contacts are provided by residues 58–60 (HWR) and Asn90. Asp147, His174, and His227 together coordinate Zn(2+). Asn273 contributes to the substrate binding site. Asp300 is a Zn(2+) binding site. Residue Asp300 is part of the active site. Substrate-binding positions include His304 and 318-319 (FG).

Belongs to the metallo-dependent hydrolases superfamily. DHOase family. Class I DHOase subfamily. The cofactor is Zn(2+).

The catalysed reaction is (S)-dihydroorotate + H2O = N-carbamoyl-L-aspartate + H(+). Its pathway is pyrimidine metabolism; UMP biosynthesis via de novo pathway; (S)-dihydroorotate from bicarbonate: step 3/3. Catalyzes the reversible cyclization of carbamoyl aspartate to dihydroorotate. The chain is Dihydroorotase from Fusobacterium nucleatum subsp. nucleatum (strain ATCC 25586 / DSM 15643 / BCRC 10681 / CIP 101130 / JCM 8532 / KCTC 2640 / LMG 13131 / VPI 4355).